The primary structure comprises 382 residues: Protein MGF 360-4L (382 aa).

Belongs to the asfivirus MGF 360 family.

In terms of biological role, plays a role in virus cell tropism, and may be required for efficient virus replication in macrophages. This chain is Protein MGF 360-4L, found in Ornithodoros (relapsing fever ticks).